Reading from the N-terminus, the 863-residue chain is Nitrate reductase [NADH] (863 aa).

C137 is a binding site for Mo-molybdopterin. Residues 484-559 (KKYVTKAMLE…LEQFYIAELA (76 aa)) enclose the Cytochrome b5 heme-binding domain. Residues H519 and H542 each contribute to the heme site. The FAD-binding FR-type domain occupies 602–719 (KKQKAAELKE…KGPIGHFHYD (118 aa)). Residues 659–662 (RAYT), 676–680 (VVKIY), F688, 693–695 (KFS), and T746 each bind FAD.

The protein belongs to the nitrate reductase family. Homodimer. FAD is required as a cofactor. Mo-molybdopterin serves as cofactor. It depends on heme as a cofactor.

It carries out the reaction nitrite + NAD(+) + H2O = nitrate + NADH + H(+). Nitrate reductase is a key enzyme involved in the first step of nitrate assimilation in plants, fungi and bacteria. This is Nitrate reductase [NADH] from Ulva prolifera (Green seaweed).